Reading from the N-terminus, the 596-residue chain is Elongation factor 4 (596 aa).

Positions 2 to 184 (KHIRNFSIIA…VIVEQIPPPE (183 aa)) constitute a tr-type G domain. GTP is bound by residues 14 to 19 (DHGKST) and 131 to 134 (NKID).

It belongs to the TRAFAC class translation factor GTPase superfamily. Classic translation factor GTPase family. LepA subfamily.

The protein localises to the cell inner membrane. It carries out the reaction GTP + H2O = GDP + phosphate + H(+). In terms of biological role, required for accurate and efficient protein synthesis under certain stress conditions. May act as a fidelity factor of the translation reaction, by catalyzing a one-codon backward translocation of tRNAs on improperly translocated ribosomes. Back-translocation proceeds from a post-translocation (POST) complex to a pre-translocation (PRE) complex, thus giving elongation factor G a second chance to translocate the tRNAs correctly. Binds to ribosomes in a GTP-dependent manner. The chain is Elongation factor 4 from Shewanella piezotolerans (strain WP3 / JCM 13877).